The chain runs to 338 residues: MRTWLTRGWLARLLWPLAQLHGQAVRLRRALYRSGILESCRFGVPVIVAGNVVAGGAGKTPLVMALVRHLQAQGLQVGVVSRGYGRSSHESLEVSIGTPVAQSGDEPALIKRATNAPVFVAKKRADAVRRLLATYPSTAVVVCDDGLQHYALQRDIEIAVFDDRGVGNGWLLPAGPLREPWPGRRQQGLDLVLHTGLKPAFEGFTSGRQLADHAIAADGSQIALTALRGRTLVALAGIANPEAFFAMLRARGLVLEQTLSLPDHHDFGAGDLAACAGKTVLCTEKDAVKLFGKPGLASLQLLAVPLVFSPEPAFFAALDALLAPLLSQLPSGHGYQTA.

53 to 60 (VAGGAGKT) is a binding site for ATP.

It belongs to the LpxK family.

It catalyses the reaction a lipid A disaccharide + ATP = a lipid IVA + ADP + H(+). The protein operates within glycolipid biosynthesis; lipid IV(A) biosynthesis; lipid IV(A) from (3R)-3-hydroxytetradecanoyl-[acyl-carrier-protein] and UDP-N-acetyl-alpha-D-glucosamine: step 6/6. Transfers the gamma-phosphate of ATP to the 4'-position of a tetraacyldisaccharide 1-phosphate intermediate (termed DS-1-P) to form tetraacyldisaccharide 1,4'-bis-phosphate (lipid IVA). In Polaromonas sp. (strain JS666 / ATCC BAA-500), this protein is Tetraacyldisaccharide 4'-kinase.